A 602-amino-acid chain; its full sequence is Putative pentatricopeptide repeat-containing protein At1g12700, mitochondrial (602 aa).

A mitochondrion-targeting transit peptide spans 1–95 (MMIKRSITTN…PSLVDFSRFF (95 aa)). PPR repeat units follow at residues 87-121 (SLVD…GIAH), 122-156 (NIYT…GYEP), 157-191 (DTTT…GCQP), 192-226 (DVVT…NVKA), 227-261 (DVFT…GIKS), 262-296 (SVVT…EIVP), 297-331 (NVIT…GISP), 332-366 (NIIT…KCSP), 367-401 (DIVT…GLVA), 402-436 (NAVT…GVLP), 437-471 (DVMT…KMDL), 472-506 (GIVM…GVKP), 507-541 (NVMT…GNAP), and 542-576 (NDCT…GFSA).

Belongs to the PPR family. P subfamily.

The protein localises to the mitochondrion. In Arabidopsis thaliana (Mouse-ear cress), this protein is Putative pentatricopeptide repeat-containing protein At1g12700, mitochondrial.